A 272-amino-acid polypeptide reads, in one-letter code: Aquaporin-1 (272 aa).

The Cytoplasmic portion of the chain corresponds to 1 to 11; that stretch reads MASEFKKKLFW. Residues 12 to 29 traverse the membrane as a helical segment; it reads RAVVAEFLAMILFIFISI. Topologically, residues 30 to 48 are extracellular; it reads GSALGFHYPIKSNQTTGAV. Residue asparagine 42 is glycosylated (N-linked (GlcNAc...) asparagine). A helical membrane pass occupies residues 49–67; sequence QDNVKVSLAFGLSIATLAQ. Residues 68 to 70 are Cytoplasmic-facing; sequence SVG. Residues 71-84 lie within the membrane without spanning it; it reads HISGAHLNPAVTLG. Positions 78-80 match the NPA 1 motif; the sequence is NPA. The Cytoplasmic segment spans residues 85 to 92; it reads LLLSCQIS. Residues 93 to 111 traverse the membrane as a helical segment; the sequence is ILRAIMYIIAQCVGAIVAT. Residues 112–135 lie on the Extracellular side of the membrane; the sequence is VILSGITSSLPDNSLGLNALAPGV. Residues 136–155 form a helical membrane-spanning segment; it reads NSGQGLGIEIIGTLQLVLCV. Residues 156-166 lie on the Cytoplasmic side of the membrane; sequence LATTDRRRRRD. A helical transmembrane segment spans residues 167-184; sequence LGDSGPLAIGFSVALGHL. Residues 185–189 lie on the Extracellular side of the membrane; sequence LAIDY. Residues 190–202 lie within the membrane without spanning it; sequence TGCGINPARSFGS. Residues 195–197 carry the NPA 2 motif; sequence NPA. The Extracellular portion of the chain corresponds to 203-209; it reads SVITHNF. A helical transmembrane segment spans residues 210 to 227; that stretch reads QDHWIFWVGPFIGAALAV. The Cytoplasmic portion of the chain corresponds to 228–272; sequence LIYDFILAPRSSDLTDRVKVWTSGQVEEYDLDADDINSRVEMKPK. Phosphoserine is present on serine 250. Residue tyrosine 256 is modified to Phosphotyrosine. Residue serine 265 is modified to Phosphoserine.

It belongs to the MIP/aquaporin (TC 1.A.8) family. As to quaternary structure, homotetramer; each monomer provides an independent water pore. Component of the ankyrin-1 complex in the erythrocyte, composed of ANK1, RHCE, RHAG, SLC4A1, EPB42, GYPA, GYPB and AQP1. Interacts with EPHB2; involved in endolymph production in the inner ear. Identified in a complex with STOM. Interacts (via the N-terminal) with ANK1 (via ANK 1-5 repeats). Interacts (via the C-terminal) with EPB42. Detected in fetal kidney (at protein level). Detected in fetal kidney.

Its subcellular location is the cell membrane. The enzyme catalyses H2O(in) = H2O(out). The catalysed reaction is nitric oxide(out) = nitric oxide(in). It catalyses the reaction CO2(out) = CO2(in). It carries out the reaction glycerol(in) = glycerol(out). The enzyme catalyses H2O2(out) = H2O2(in). The catalysed reaction is K(+)(in) = K(+)(out). It catalyses the reaction Na(+)(in) = Na(+)(out). Functionally, forms a water channel that facilitates the transport of water across cell membranes, playing a crucial role in water homeostasis in various tissues. Could also be permeable to small solutes including hydrogen peroxide, glycerol and gases such as amonnia (NH3), nitric oxide (NO) and carbon dioxide (CO2). Recruited to the ankyrin-1 complex, a multiprotein complex of the erythrocyte membrane, it could be part of a CO2 metabolon, linking facilitated diffusion of CO2 across the membrane, anion exchange of Cl(-)/HCO3(-) and interconversion of dissolved CO2 and carbonic acid in the cytosol. In vitro, it shows non-selective gated cation channel activity and may be permeable to cations like K(+) and Na(+) in vivo. The protein is Aquaporin-1 of Ovis aries (Sheep).